The primary structure comprises 377 residues: tRNA-specific 2-thiouridylase MnmA (377 aa).

ATP-binding positions include 9 to 16 (AMSGGVDS) and leucine 35. The active-site Nucleophile is cysteine 105. A disulfide bridge links cysteine 105 with cysteine 201. Glycine 129 is a binding site for ATP. Residues 151–153 (KNQ) form an interaction with tRNA region. The Cysteine persulfide intermediate role is filled by cysteine 201. The segment at 307–308 (RY) is interaction with tRNA.

This sequence belongs to the MnmA/TRMU family.

The protein resides in the cytoplasm. The catalysed reaction is S-sulfanyl-L-cysteinyl-[protein] + uridine(34) in tRNA + AH2 + ATP = 2-thiouridine(34) in tRNA + L-cysteinyl-[protein] + A + AMP + diphosphate + H(+). Its function is as follows. Catalyzes the 2-thiolation of uridine at the wobble position (U34) of tRNA, leading to the formation of s(2)U34. This Leptospira borgpetersenii serovar Hardjo-bovis (strain JB197) protein is tRNA-specific 2-thiouridylase MnmA.